Here is a 107-residue protein sequence, read N- to C-terminus: Multidrug resistance protein mmr (107 aa).

4 helical membrane-spanning segments follow: residues 2-19 (TYLFLICAILAEVVATSL), 29-51 (LWPTVICLLGYAVSFALLAVSIS), 58-80 (VAYALWSAIGTALIVLIAVLFLG), and 84-106 (SVTKVVGVGLIIAGVVTLNLTGA).

It belongs to the drug/metabolite transporter (DMT) superfamily. Small multidrug resistance (SMR) (TC 2.A.7.1) family. Mmr subfamily.

The protein localises to the cell membrane. Multidrug efflux pump. Confers resistance to tetraphenylphosphonium (TPP), erythromycin, ethidium bromide, acriflavine, safranin O and pyronin Y. The polypeptide is Multidrug resistance protein mmr (mmr) (Mycolicibacterium paratuberculosis (strain ATCC BAA-968 / K-10) (Mycobacterium paratuberculosis)).